Reading from the N-terminus, the 316-residue chain is 4-hydroxy-3-methylbut-2-enyl diphosphate reductase (316 aa).

C12 is a binding site for [4Fe-4S] cluster. 2 residues coordinate (2E)-4-hydroxy-3-methylbut-2-enyl diphosphate: H41 and H74. Dimethylallyl diphosphate is bound by residues H41 and H74. Isopentenyl diphosphate is bound by residues H41 and H74. C96 lines the [4Fe-4S] cluster pocket. A (2E)-4-hydroxy-3-methylbut-2-enyl diphosphate-binding site is contributed by H124. Residue H124 participates in dimethylallyl diphosphate binding. H124 contacts isopentenyl diphosphate. The active-site Proton donor is the E126. T167 is a (2E)-4-hydroxy-3-methylbut-2-enyl diphosphate binding site. Residue C197 coordinates [4Fe-4S] cluster. Residues S225, S226, N227, and S269 each coordinate (2E)-4-hydroxy-3-methylbut-2-enyl diphosphate. Dimethylallyl diphosphate contacts are provided by S225, S226, N227, and S269. Isopentenyl diphosphate-binding residues include S225, S226, N227, and S269.

This sequence belongs to the IspH family. Homodimer. The cofactor is [4Fe-4S] cluster.

It carries out the reaction isopentenyl diphosphate + 2 oxidized [2Fe-2S]-[ferredoxin] + H2O = (2E)-4-hydroxy-3-methylbut-2-enyl diphosphate + 2 reduced [2Fe-2S]-[ferredoxin] + 2 H(+). The enzyme catalyses dimethylallyl diphosphate + 2 oxidized [2Fe-2S]-[ferredoxin] + H2O = (2E)-4-hydroxy-3-methylbut-2-enyl diphosphate + 2 reduced [2Fe-2S]-[ferredoxin] + 2 H(+). It participates in isoprenoid biosynthesis; dimethylallyl diphosphate biosynthesis; dimethylallyl diphosphate from (2E)-4-hydroxy-3-methylbutenyl diphosphate: step 1/1. The protein operates within isoprenoid biosynthesis; isopentenyl diphosphate biosynthesis via DXP pathway; isopentenyl diphosphate from 1-deoxy-D-xylulose 5-phosphate: step 6/6. In terms of biological role, catalyzes the conversion of 1-hydroxy-2-methyl-2-(E)-butenyl 4-diphosphate (HMBPP) into a mixture of isopentenyl diphosphate (IPP) and dimethylallyl diphosphate (DMAPP). Acts in the terminal step of the DOXP/MEP pathway for isoprenoid precursor biosynthesis. The protein is 4-hydroxy-3-methylbut-2-enyl diphosphate reductase of Pectobacterium atrosepticum (strain SCRI 1043 / ATCC BAA-672) (Erwinia carotovora subsp. atroseptica).